Consider the following 907-residue polypeptide: Coatomer subunit beta'-1 (907 aa).

WD repeat units lie at residues 13 to 52 (QRSE…MVKS), 55 to 94 (VSEL…KVKV), 97 to 136 (AHTD…MCTQ), 140 to 180 (GHSH…PNFT), 183 to 224 (GHQK…CVQT), 227 to 266 (GHTH…LENT), 269 to 309 (YGLE…ASMD), 351 to 389 (SCDL…NRSF), and 461 to 501 (RIDV…SYLE). 2 stretches are compositionally biased toward acidic residues: residues 850–866 (ETED…EEVL) and 874–887 (STDE…DEPE). Residues 850–887 (ETEDALDENGEPDEEVLEENKVEESTDEAVEVDADEPE) are disordered.

Belongs to the WD repeat COPB2 family. In terms of assembly, oligomeric complex that consists of at least the alpha, beta, beta', gamma, delta, epsilon and zeta subunits.

The protein localises to the cytoplasm. It is found in the golgi apparatus membrane. It localises to the cytoplasmic vesicle. Its subcellular location is the COPI-coated vesicle membrane. Its function is as follows. The coatomer is a cytosolic protein complex that binds to dilysine motifs and reversibly associates with Golgi non-clathrin-coated vesicles, which further mediate biosynthetic protein transport from the ER, via the Golgi up to the trans Golgi network. Coatomer complex is required for budding from Golgi membranes, and is essential for the retrograde Golgi-to-ER transport of dilysine-tagged proteins. The polypeptide is Coatomer subunit beta'-1 (Oryza sativa subsp. japonica (Rice)).